The following is a 387-amino-acid chain: Probable G-protein coupled receptor 173 (387 aa).

The Extracellular segment spans residues 1–40 (MANGNASSDGPGNPLAAVVSTTGGVMGGAPSSAVSTYVKL). Asn-5 carries N-linked (GlcNAc...) asparagine glycosylation. The chain crosses the membrane as a helical span at residues 41–61 (VLLGLIICISLVGNLVVSLLV). Over 62–87 (LRDRALHKAPYYFLLDLCLADTIRSA) the chain is Cytoplasmic. Residues 88-108 (VCFPFVLVSIKNGSAWTYSVL) form a helical membrane-spanning segment. Residues 109–111 (SCK) lie on the Extracellular side of the membrane. Cys-110 and Cys-188 are joined by a disulfide. The chain crosses the membrane as a helical span at residues 112 to 132 (VVAFMAVLFCFHAAFMLFCIS). Residues 133-153 (VTRYMAIAHHRFYSKRMTFWT) are Cytoplasmic-facing. Residues 154 to 174 (CVAVVCMVWTLSVAMAFPPVF) form a helical membrane-spanning segment. Residues 175–202 (DVGTYKFIREEDQCIFEHRYFKANDTLG) are Extracellular-facing. Asn-198 is a glycosylation site (N-linked (GlcNAc...) asparagine). A helical membrane pass occupies residues 203 to 223 (FMLMLAVLILATHVVYMKLLL). Residues 224 to 301 (FEYKHRKMKP…FKAEKQLGRM (78 aa)) lie on the Cytoplasmic side of the membrane. A helical membrane pass occupies residues 302–322 (FYVITLFFLVLWSPYIVACYW). The Extracellular segment spans residues 323 to 335 (RVFVKACTIPHRY). Residues 336–356 (LSTTVWMSFAQAGVNPIICFF) form a helical membrane-spanning segment. The Cytoplasmic portion of the chain corresponds to 357-387 (LNKDLKKGLLAHLPPCCRTPPQLPREPYCVM).

It belongs to the G-protein coupled receptor 1 family.

It is found in the cell membrane. Its function is as follows. Is a receptor for the SMIM20 derived peptides Phoenixin-14 and Phoenixin-20. It mediates the Phoenixin-14 and Phoenixin-20 augmentation of gonadotropin-releasing hormone (GNRH) signaling in the hypothalamus and pituitary gland. In the ovary, it mediates the effects of Phoenixin-14 and Phoenixin-20 induced granulosa cell proliferation during follicular growth. The chain is Probable G-protein coupled receptor 173 (gpr173) from Danio rerio (Zebrafish).